The chain runs to 150 residues: MTNSFQNSRRDLRERAFQALFNIEMGAELLAASQFAYGYDKVTGEDAQVLELPIFLLSLVTGVNNHKEELDNLISTHLKKGWSLERLTLTDKTLLRLGLFEIKYFDETPDRVALNEIIEVAKKYSDETSAKFINGLLSQYVSGAPSANKS.

This sequence belongs to the NusB family.

Involved in transcription antitermination. Required for transcription of ribosomal RNA (rRNA) genes. Binds specifically to the boxA antiterminator sequence of the ribosomal RNA (rrn) operons. The polypeptide is Transcription antitermination protein NusB (Streptococcus pyogenes serotype M1).